The primary structure comprises 558 residues: Formate--tetrahydrofolate ligase (558 aa).

Residue 66-73 (TPAGEGKT) coordinates ATP.

The protein belongs to the formate--tetrahydrofolate ligase family.

The enzyme catalyses (6S)-5,6,7,8-tetrahydrofolate + formate + ATP = (6R)-10-formyltetrahydrofolate + ADP + phosphate. The protein operates within one-carbon metabolism; tetrahydrofolate interconversion. This Neisseria meningitidis serogroup B (strain ATCC BAA-335 / MC58) protein is Formate--tetrahydrofolate ligase.